A 298-amino-acid polypeptide reads, in one-letter code: MATNEEHLRKPEWLKIKLNTNENYTGLKKLMRENRLHTVCEEAKCPNIHECWAVRRTATFMILGNVCTRACRFCAVKTGLPTELDWQEPERVAESVRLMNLKHVVVTAVARDDLKDGGAAVFAETVRAIRRKNPFTTIEVLPSDMGGVYENLKTLMDARPDILNHNIETVRRLTPRVRARATYERSLEFLRRAKELQPDIPTKSSIMVGLGETKEEIIEAMDDLRANHVDILTIGQYLQPTKKHLKVVKYYHPDEFRELKEIALSKGFTHCEAGPLVRSSYHADEQVNAASAARQMKA.

Cysteine 40, cysteine 45, cysteine 51, cysteine 67, cysteine 71, cysteine 74, and serine 280 together coordinate [4Fe-4S] cluster. Positions 53-269 constitute a Radical SAM core domain; it reads AVRRTATFMI…KEIALSKGFT (217 aa).

Belongs to the radical SAM superfamily. Lipoyl synthase family. It depends on [4Fe-4S] cluster as a cofactor.

Its subcellular location is the cytoplasm. The enzyme catalyses [[Fe-S] cluster scaffold protein carrying a second [4Fe-4S](2+) cluster] + N(6)-octanoyl-L-lysyl-[protein] + 2 oxidized [2Fe-2S]-[ferredoxin] + 2 S-adenosyl-L-methionine + 4 H(+) = [[Fe-S] cluster scaffold protein] + N(6)-[(R)-dihydrolipoyl]-L-lysyl-[protein] + 4 Fe(3+) + 2 hydrogen sulfide + 2 5'-deoxyadenosine + 2 L-methionine + 2 reduced [2Fe-2S]-[ferredoxin]. Its pathway is protein modification; protein lipoylation via endogenous pathway; protein N(6)-(lipoyl)lysine from octanoyl-[acyl-carrier-protein]. In terms of biological role, catalyzes the radical-mediated insertion of two sulfur atoms into the C-6 and C-8 positions of the octanoyl moiety bound to the lipoyl domains of lipoate-dependent enzymes, thereby converting the octanoylated domains into lipoylated derivatives. The sequence is that of Lipoyl synthase from Geobacillus sp. (strain WCH70).